The primary structure comprises 223 residues: UPF0441 protein YgiB (223 aa).

Over residues 178–195 (TVPKTAMAPKPATTTTVT) the composition is skewed to low complexity. Positions 178–223 (TVPKTAMAPKPATTTTVTRGGFGESVAKQSTMQRSAAGTSTRSMGG) are disordered. The segment covering 204 to 223 (AKQSTMQRSAAGTSTRSMGG) has biased composition (polar residues).

This sequence belongs to the UPF0441 family.

This Salmonella paratyphi B (strain ATCC BAA-1250 / SPB7) protein is UPF0441 protein YgiB.